Here is a 277-residue protein sequence, read N- to C-terminus: Protein EURL homolog (277 aa).

The segment at 173–201 (LGLWPGERPQNREQRDSRQRRHSGHSREE) is disordered. The stretch at 197 to 229 (HSREELMRKNVEELRQLNEQLLLQIQNVFEELS) forms a coiled coil.

The protein belongs to the EURL family.

In terms of biological role, plays a role in cortical progenitor cell proliferation and differentiation. May promote dendritic spine development of post-migratory cortical projection neurons by modulating the beta-catenin signaling pathway. The chain is Protein EURL homolog from Danio rerio (Zebrafish).